We begin with the raw amino-acid sequence, 311 residues long: Aspartate carbamoyltransferase catalytic subunit (311 aa).

Arg55 and Thr56 together coordinate carbamoyl phosphate. An L-aspartate-binding site is contributed by Lys85. Carbamoyl phosphate is bound by residues Arg106, His135, and Gln138. The L-aspartate site is built by Arg168 and Arg230. Carbamoyl phosphate contacts are provided by Leu268 and Pro269.

The protein belongs to the aspartate/ornithine carbamoyltransferase superfamily. ATCase family. As to quaternary structure, heterododecamer (2C3:3R2) of six catalytic PyrB chains organized as two trimers (C3), and six regulatory PyrI chains organized as three dimers (R2).

It carries out the reaction carbamoyl phosphate + L-aspartate = N-carbamoyl-L-aspartate + phosphate + H(+). It functions in the pathway pyrimidine metabolism; UMP biosynthesis via de novo pathway; (S)-dihydroorotate from bicarbonate: step 2/3. In terms of biological role, catalyzes the condensation of carbamoyl phosphate and aspartate to form carbamoyl aspartate and inorganic phosphate, the committed step in the de novo pyrimidine nucleotide biosynthesis pathway. The protein is Aspartate carbamoyltransferase catalytic subunit of Pectobacterium atrosepticum (strain SCRI 1043 / ATCC BAA-672) (Erwinia carotovora subsp. atroseptica).